Reading from the N-terminus, the 265-residue chain is 5'-nucleotidase SurE (265 aa).

Positions 8, 9, 39, and 96 each coordinate a divalent metal cation.

This sequence belongs to the SurE nucleotidase family. A divalent metal cation serves as cofactor.

It localises to the cytoplasm. It carries out the reaction a ribonucleoside 5'-phosphate + H2O = a ribonucleoside + phosphate. Nucleotidase that shows phosphatase activity on nucleoside 5'-monophosphates. This is 5'-nucleotidase SurE from Dehalococcoides mccartyi (strain CBDB1).